The following is a 92-amino-acid chain: Kinetoplastid membrane protein 11 (92 aa).

At Arg-45 the chain carries Omega-N-methylarginine.

It belongs to the KMP-11 family. Monomer. A minor in vivo processed fragment (IVP) also exists, probably as a result of proteolysis. In terms of processing, probably O-glycosylated. Contains equimolar amounts of galactosamine, galactose, glucose and mannose. Post-translationally, the N-terminus is blocked.

Its subcellular location is the cytoplasm. The protein localises to the cytoskeleton. Its function is as follows. May be involved in the regulation of the cytoskeleton through interaction with the subpellicular microtubules. May be involved in parasite mobility and attachment to the surface of the host cell. Strongly stimulates T-cell proliferation and is thought to play a role in the immunology of leishmaniasis. The chain is Kinetoplastid membrane protein 11 (KMP-11) from Leishmania donovani.